The chain runs to 366 residues: Flagellar P-ring protein (366 aa).

Residues 1 to 19 form the signal peptide; the sequence is MTLIRLLACLLFLPCLAQA.

Belongs to the FlgI family. As to quaternary structure, the basal body constitutes a major portion of the flagellar organelle and consists of four rings (L,P,S, and M) mounted on a central rod.

It localises to the periplasm. The protein resides in the bacterial flagellum basal body. Functionally, assembles around the rod to form the L-ring and probably protects the motor/basal body from shearing forces during rotation. In Ruegeria pomeroyi (strain ATCC 700808 / DSM 15171 / DSS-3) (Silicibacter pomeroyi), this protein is Flagellar P-ring protein.